Consider the following 399-residue polypeptide: Phosphoglycerate kinase (399 aa).

Residues 21–23, arginine 36, 59–62, arginine 120, and arginine 158 contribute to the substrate site; these read DFN and HLGR. Residues lysine 209, glycine 297, glutamate 328, and 355-358 contribute to the ATP site; that span reads GGDS.

Belongs to the phosphoglycerate kinase family. Monomer.

It is found in the cytoplasm. It carries out the reaction (2R)-3-phosphoglycerate + ATP = (2R)-3-phospho-glyceroyl phosphate + ADP. It functions in the pathway carbohydrate degradation; glycolysis; pyruvate from D-glyceraldehyde 3-phosphate: step 2/5. The sequence is that of Phosphoglycerate kinase from Streptococcus suis (strain 05ZYH33).